Consider the following 352-residue polypeptide: Glycerol-1-phosphate dehydrogenase [NAD(P)+] (352 aa).

Residues 91-95 (GRVID) and 113-116 (TVAS) contribute to the NAD(+) site. A substrate-binding site is contributed by Asp-118. Ser-122 provides a ligand contact to NAD(+). Glu-169 contacts substrate. Zn(2+)-binding residues include Glu-169 and His-249. Substrate is bound at residue His-253. His-269 contributes to the Zn(2+) binding site.

The protein belongs to the glycerol-1-phosphate dehydrogenase family. In terms of assembly, homodimer. Requires Zn(2+) as cofactor.

The protein resides in the cytoplasm. It catalyses the reaction sn-glycerol 1-phosphate + NAD(+) = dihydroxyacetone phosphate + NADH + H(+). It carries out the reaction sn-glycerol 1-phosphate + NADP(+) = dihydroxyacetone phosphate + NADPH + H(+). It participates in membrane lipid metabolism; glycerophospholipid metabolism. Catalyzes the NAD(P)H-dependent reduction of dihydroxyacetonephosphate (DHAP or glycerone phosphate) to glycerol 1-phosphate (G1P). The G1P thus generated is used as the glycerophosphate backbone of phospholipids in the cellular membranes of Archaea. The chain is Glycerol-1-phosphate dehydrogenase [NAD(P)+] from Caldivirga maquilingensis (strain ATCC 700844 / DSM 13496 / JCM 10307 / IC-167).